A 182-amino-acid polypeptide reads, in one-letter code: Ribosome maturation factor RimM (182 aa).

A PRC barrel domain is found at G102 to F182.

It belongs to the RimM family. As to quaternary structure, binds ribosomal protein uS19.

Its subcellular location is the cytoplasm. Its function is as follows. An accessory protein needed during the final step in the assembly of 30S ribosomal subunit, possibly for assembly of the head region. Essential for efficient processing of 16S rRNA. May be needed both before and after RbfA during the maturation of 16S rRNA. It has affinity for free ribosomal 30S subunits but not for 70S ribosomes. This is Ribosome maturation factor RimM from Pectobacterium carotovorum subsp. carotovorum (strain PC1).